Reading from the N-terminus, the 231-residue chain is 5'-methylthioadenosine/S-adenosylhomocysteine nucleosidase (231 aa).

The Proton acceptor role is filled by Glu12. Substrate is bound by residues Gly78, Val153, and 174-175 (ME). Asp198 serves as the catalytic Proton donor.

This sequence belongs to the PNP/UDP phosphorylase family. MtnN subfamily.

It carries out the reaction S-adenosyl-L-homocysteine + H2O = S-(5-deoxy-D-ribos-5-yl)-L-homocysteine + adenine. The enzyme catalyses S-methyl-5'-thioadenosine + H2O = 5-(methylsulfanyl)-D-ribose + adenine. The catalysed reaction is 5'-deoxyadenosine + H2O = 5-deoxy-D-ribose + adenine. Its pathway is amino-acid biosynthesis; L-methionine biosynthesis via salvage pathway; S-methyl-5-thio-alpha-D-ribose 1-phosphate from S-methyl-5'-thioadenosine (hydrolase route): step 1/2. Its function is as follows. Catalyzes the irreversible cleavage of the glycosidic bond in both 5'-methylthioadenosine (MTA) and S-adenosylhomocysteine (SAH/AdoHcy) to adenine and the corresponding thioribose, 5'-methylthioribose and S-ribosylhomocysteine, respectively. Also cleaves 5'-deoxyadenosine, a toxic by-product of radical S-adenosylmethionine (SAM) enzymes, into 5-deoxyribose and adenine. In Aliivibrio fischeri (Vibrio fischeri), this protein is 5'-methylthioadenosine/S-adenosylhomocysteine nucleosidase.